The primary structure comprises 382 residues: Deoxyuridine 5'-triphosphate nucleotidohydrolase (382 aa).

Residues 1–12 (MIKPNIPAPVRP) show a composition bias toward pro residues. 2 disordered regions span residues 1–60 (MIKP…MMIS) and 97–118 (LLRDGPEAPPREPTPKEARRPE). A compositionally biased stretch (basic and acidic residues) spans 100–118 (DGPEAPPREPTPKEARRPE).

Belongs to the dUTPase family. Mg(2+) is required as a cofactor.

The enzyme catalyses dUTP + H2O = dUMP + diphosphate + H(+). The protein operates within pyrimidine metabolism; dUMP biosynthesis; dUMP from dCTP (dUTP route): step 2/2. Involved in nucleotide metabolism: produces dUMP, the immediate precursor of thymidine nucleotides and decreases the intracellular concentration of dUTP to avoid uracil incorporation into viral DNA. The sequence is that of Deoxyuridine 5'-triphosphate nucleotidohydrolase from Murid herpesvirus 1 (strain Smith) (MuHV-1).